Reading from the N-terminus, the 525-residue chain is DNA polymerase epsilon subunit 2 (525 aa).

The protein belongs to the DNA polymerase epsilon subunit B family. In terms of assembly, component of the epsilon DNA polymerase complex consisting of four subunits: the catalytic subunit PolE1/DNApol-epsilon255 and the accessory subunits PolE2/DNApol-epsilon58, Chrac-14/DNApolE3 and PolE4.

It localises to the nucleus. Accessory component of the DNA polymerase epsilon complex. Participates in DNA repair and in chromosomal DNA replication. Has a role in the entrance and progression through S phase. Has a role in endoreplication. Essential for viability and tissue development. This Drosophila melanogaster (Fruit fly) protein is DNA polymerase epsilon subunit 2.